We begin with the raw amino-acid sequence, 965 residues long: Aminopeptidase N (965 aa).

Residues 2–8 (AKGFYIS) lie on the Cytoplasmic side of the membrane. Residues 9–32 (KTLGILGILLGVAAVCTIIALSVV) traverse the membrane as a helical; Signal-anchor for type II membrane protein segment. The interval 33 to 68 (YAQEKNRNAENSAIAPTLPGSTSATTSTTNPAIDES) is cytosolic Ser/Thr-rich junction. At 33–965 (YAQEKNRNAE…VVLKWFTENS (933 aa)) the chain is on the extracellular side. The interval 44-68 (SAIAPTLPGSTSATTSTTNPAIDES) is disordered. Over residues 47–64 (APTLPGSTSATTSTTNPA) the composition is skewed to low complexity. The segment at 69–965 (KPWNQYRLPK…VVLKWFTENS (897 aa)) is metalloprotease. Residues Asn-114 and Asn-128 are each glycosylated (N-linked (GlcNAc...) asparagine). A Sulfotyrosine modification is found at Tyr-176. Residues Asn-234, Asn-242, and Asn-264 are each glycosylated (N-linked (GlcNAc...) asparagine). 351-355 (GAMEN) is a binding site for substrate. His-387 serves as a coordination point for Zn(2+). Glu-388 (proton acceptor) is an active-site residue. 2 residues coordinate Zn(2+): His-391 and Glu-410. Residues Asn-555, Asn-606, and Asn-624 are each glycosylated (N-linked (GlcNAc...) asparagine). Cys-760 and Cys-767 are disulfide-bonded. N-linked (GlcNAc...) asparagine glycosylation occurs at Asn-780. Residues Cys-797 and Cys-833 are joined by a disulfide bond. Tyr-852 bears the Phosphotyrosine mark.

The protein belongs to the peptidase M1 family. Homodimer. Interacts with SLC6A19. Zn(2+) serves as cofactor. Sulfated. Post-translationally, N- and O-glycosylated. In terms of processing, may undergo proteolysis and give rise to a soluble form. As to expression, widely distributed throughout the CNS. Particularly abundant in kidney and intestinal microvilli, also detected in lung and liver. Weakly expressed in heart and aorta.

It localises to the cell membrane. It catalyses the reaction Release of an N-terminal amino acid, Xaa-|-Yaa- from a peptide, amide or arylamide. Xaa is preferably Ala, but may be most amino acids including Pro (slow action). When a terminal hydrophobic residue is followed by a prolyl residue, the two may be released as an intact Xaa-Pro dipeptide.. Functionally, broad specificity aminopeptidase which plays a role in the final digestion of peptides generated from hydrolysis of proteins by gastric and pancreatic proteases. Also involved in the processing of various peptides including peptide hormones, such as angiotensin III and IV, neuropeptides, and chemokines. May also be involved the cleavage of peptides bound to major histocompatibility complex class II molecules of antigen presenting cells. May have a role in angiogenesis and promote cholesterol crystallization. May have a role in amino acid transport by acting as binding partner of amino acid transporter SLC6A19 and regulating its activity. The polypeptide is Aminopeptidase N (Anpep) (Rattus norvegicus (Rat)).